The primary structure comprises 261 residues: 14-3-3-like protein A (261 aa).

The protein belongs to the 14-3-3 family.

This chain is 14-3-3-like protein A, found in Vicia faba (Broad bean).